Here is a 477-residue protein sequence, read N- to C-terminus: Glycogen synthase (477 aa).

Lys15 lines the ADP-alpha-D-glucose pocket.

This sequence belongs to the glycosyltransferase 1 family. Bacterial/plant glycogen synthase subfamily.

It carries out the reaction [(1-&gt;4)-alpha-D-glucosyl](n) + ADP-alpha-D-glucose = [(1-&gt;4)-alpha-D-glucosyl](n+1) + ADP + H(+). The protein operates within glycan biosynthesis; glycogen biosynthesis. Synthesizes alpha-1,4-glucan chains using ADP-glucose. The sequence is that of Glycogen synthase from Serratia proteamaculans (strain 568).